Consider the following 637-residue polypeptide: Threonine--tRNA ligase (637 aa).

A TGS domain is found at 1–61 (MITITLPDSS…ATDAAVRLIT (61 aa)). The interval 238 to 528 (DHRKLGAELD…LIEHFAGKFP (291 aa)) is catalytic. Positions 329, 380, and 505 each coordinate Zn(2+).

It belongs to the class-II aminoacyl-tRNA synthetase family. As to quaternary structure, homodimer. Zn(2+) is required as a cofactor.

The protein resides in the cytoplasm. It carries out the reaction tRNA(Thr) + L-threonine + ATP = L-threonyl-tRNA(Thr) + AMP + diphosphate + H(+). In terms of biological role, catalyzes the attachment of threonine to tRNA(Thr) in a two-step reaction: L-threonine is first activated by ATP to form Thr-AMP and then transferred to the acceptor end of tRNA(Thr). Also edits incorrectly charged L-seryl-tRNA(Thr). In Desulfosudis oleivorans (strain DSM 6200 / JCM 39069 / Hxd3) (Desulfococcus oleovorans), this protein is Threonine--tRNA ligase.